The primary structure comprises 151 residues: Large ribosomal subunit protein bL9 (151 aa).

It belongs to the bacterial ribosomal protein bL9 family.

Its function is as follows. Binds to the 23S rRNA. The sequence is that of Large ribosomal subunit protein bL9 from Pseudothermotoga lettingae (strain ATCC BAA-301 / DSM 14385 / NBRC 107922 / TMO) (Thermotoga lettingae).